We begin with the raw amino-acid sequence, 197 residues long: dITP/XTP pyrophosphatase (197 aa).

Residue 8 to 13 coordinates substrate; sequence TGNAGK. Mg(2+) contacts are provided by glutamate 40 and aspartate 69. Residue aspartate 69 is the Proton acceptor of the active site. Substrate is bound by residues serine 70, 154 to 157, lysine 177, and 182 to 183; these read FGYD and HR.

Belongs to the HAM1 NTPase family. As to quaternary structure, homodimer. Requires Mg(2+) as cofactor.

It carries out the reaction XTP + H2O = XMP + diphosphate + H(+). It catalyses the reaction dITP + H2O = dIMP + diphosphate + H(+). The catalysed reaction is ITP + H2O = IMP + diphosphate + H(+). Functionally, pyrophosphatase that catalyzes the hydrolysis of nucleoside triphosphates to their monophosphate derivatives, with a high preference for the non-canonical purine nucleotides XTP (xanthosine triphosphate), dITP (deoxyinosine triphosphate) and ITP. Seems to function as a house-cleaning enzyme that removes non-canonical purine nucleotides from the nucleotide pool, thus preventing their incorporation into DNA/RNA and avoiding chromosomal lesions. The polypeptide is dITP/XTP pyrophosphatase (rdgB) (Escherichia coli O157:H7).